Reading from the N-terminus, the 355-residue chain is Biotin synthase (355 aa).

The 225-residue stretch at 51–275 folds into the Radical SAM core domain; sequence NTVKVNYLVN…VCPDKEIRIA (225 aa). [4Fe-4S] cluster-binding residues include cysteine 66, cysteine 70, and cysteine 73. 4 residues coordinate [2Fe-2S] cluster: cysteine 110, cysteine 143, cysteine 203, and arginine 273.

It belongs to the radical SAM superfamily. Biotin synthase family. In terms of assembly, homodimer. Requires [4Fe-4S] cluster as cofactor. [2Fe-2S] cluster is required as a cofactor.

It catalyses the reaction (4R,5S)-dethiobiotin + (sulfur carrier)-SH + 2 reduced [2Fe-2S]-[ferredoxin] + 2 S-adenosyl-L-methionine = (sulfur carrier)-H + biotin + 2 5'-deoxyadenosine + 2 L-methionine + 2 oxidized [2Fe-2S]-[ferredoxin]. Its pathway is cofactor biosynthesis; biotin biosynthesis; biotin from 7,8-diaminononanoate: step 2/2. In terms of biological role, catalyzes the conversion of dethiobiotin (DTB) to biotin by the insertion of a sulfur atom into dethiobiotin via a radical-based mechanism. This chain is Biotin synthase, found in Saccharopolyspora erythraea (strain ATCC 11635 / DSM 40517 / JCM 4748 / NBRC 13426 / NCIMB 8594 / NRRL 2338).